Here is a 274-residue protein sequence, read N- to C-terminus: Putative pyruvate, phosphate dikinase regulatory protein (274 aa).

153–160 (GISRTSKT) contacts ADP.

Belongs to the pyruvate, phosphate/water dikinase regulatory protein family. PDRP subfamily.

It carries out the reaction N(tele)-phospho-L-histidyl/L-threonyl-[pyruvate, phosphate dikinase] + ADP = N(tele)-phospho-L-histidyl/O-phospho-L-threonyl-[pyruvate, phosphate dikinase] + AMP + H(+). The enzyme catalyses N(tele)-phospho-L-histidyl/O-phospho-L-threonyl-[pyruvate, phosphate dikinase] + phosphate + H(+) = N(tele)-phospho-L-histidyl/L-threonyl-[pyruvate, phosphate dikinase] + diphosphate. Bifunctional serine/threonine kinase and phosphorylase involved in the regulation of the pyruvate, phosphate dikinase (PPDK) by catalyzing its phosphorylation/dephosphorylation. This is Putative pyruvate, phosphate dikinase regulatory protein from Bartonella tribocorum (strain CIP 105476 / IBS 506).